The primary structure comprises 217 residues: MMAAGPRTSLLLAFALLCLPWTQVVGAFPAMSLSGLFANAVLRAQHLHQLAADTFKEFERTYIPEGQRYSIQNTQVAFCFSETIPAPTGKNEAQQKSDLELLRISLLLIQSWLGPLQFLSRVFTNSLVFGTSDRVYEKLKDLEEGILALMRELEDGTPRAGQILKQTYDKFDTNMRSDDALLKNYGLLSCFRKDLHKTETYLRVMKCRRFGEASCAF.

Residues 1–26 form the signal peptide; the sequence is MMAAGPRTSLLLAFALLCLPWTQVVG. Zn(2+) is bound at residue H46. C79 and C190 form a disulfide bridge. Residue S132 is modified to Phosphoserine. E199 contacts Zn(2+). A disulfide bridge connects residues C207 and C215.

The protein belongs to the somatotropin/prolactin family.

Its subcellular location is the secreted. Its function is as follows. Plays an important role in growth control. Its major role in stimulating body growth is to stimulate the liver and other tissues to secrete IGF1. It stimulates both the differentiation and proliferation of myoblasts. It also stimulates amino acid uptake and protein synthesis in muscle and other tissues. This is Somatotropin (GH1) from Bos taurus (Bovine).